A 73-amino-acid chain; its full sequence is Serine rich endogenous peptide 1 (73 aa).

An N-terminal signal peptide occupies residues 1 to 28 (MGMSGSSGLVHVLMLLLLLSILFHHTES). The disordered stretch occupies residues 48-73 (YKPNTAVETPPSRSRRGGGGQNTGAD). The SCOOP motif motif lies at 53-67 (AVETPPSRSRRGGGG). The SxS motif essential for MIK2 binding motif lies at 59–61 (SRS). Gly residues predominate over residues 64–73 (GGGGQNTGAD).

Belongs to the serine rich endogenous peptide (SCOOP) phytocytokine family. In terms of assembly, interacts with MIK2 (via extracellular leucine-rich repeat domain); this interaction triggers the formation of complex between MIK2 and the BAK1/SERK3 and SERK4 coreceptors, and subsequent BAK1 activation by phosphorylation. As to expression, mostly expressed in leaves and flowers, and, to a lower extent, in seedlings shoots.

It localises to the cell membrane. The protein resides in the secreted. It is found in the extracellular space. The protein localises to the apoplast. Functionally, brassicaceae-specific phytocytokine (plant endogenous peptide released into the apoplast) perceived by MIK2 in a BAK1/SERK3 and SERK4 coreceptors-dependent manner, that modulates various physiological and antimicrobial processes including growth prevention and reactive oxygen species (ROS) response regulation. The protein is Serine rich endogenous peptide 1 of Arabidopsis thaliana (Mouse-ear cress).